Here is a 141-residue protein sequence, read N- to C-terminus: Large ribosomal subunit protein uL11 (141 aa).

It belongs to the universal ribosomal protein uL11 family. As to quaternary structure, part of the ribosomal stalk of the 50S ribosomal subunit. Interacts with L10 and the large rRNA to form the base of the stalk. L10 forms an elongated spine to which L12 dimers bind in a sequential fashion forming a multimeric L10(L12)X complex. One or more lysine residues are methylated.

Its function is as follows. Forms part of the ribosomal stalk which helps the ribosome interact with GTP-bound translation factors. In Coprothermobacter proteolyticus (strain ATCC 35245 / DSM 5265 / OCM 4 / BT), this protein is Large ribosomal subunit protein uL11.